Reading from the N-terminus, the 544-residue chain is Thermosome subunit (544 aa).

This sequence belongs to the TCP-1 chaperonin family. As to quaternary structure, forms an oligomeric complex of eight-membered rings.

Molecular chaperone; binds unfolded polypeptides in vitro, and has a weak ATPase activity. This chain is Thermosome subunit (ths), found in Methanothermococcus thermolithotrophicus (Methanococcus thermolithotrophicus).